Reading from the N-terminus, the 243-residue chain is Nuclear ubiquitous casein and cyclin-dependent kinase substrate 1 (243 aa).

A disordered region spans residues 1–243 (MSRPVRNRKV…SEDEAASGED (243 aa)). Position 13 is a phosphotyrosine (tyrosine 13). 2 positions are modified to phosphoserine: serine 14 and serine 19. Phosphotyrosine is present on tyrosine 26. Residues 35–51 (KKIRSSPREAKNKRRSG) are compositionally biased toward basic residues. Phosphoserine occurs at positions 54, 58, 61, 73, 75, and 79. The span at 64 to 77 (KDVKTKKDDSHSAE) shows a compositional bias: basic and acidic residues. Residues 91–100 (QQRQAASKAA) show a composition bias toward low complexity. Residues 111–124 (VGSEEEPEEDDEAP) are compositionally biased toward acidic residues. 4 positions are modified to phosphoserine: serine 113, serine 130, serine 132, and serine 144. Residues 132–145 (SDEDFLMEDDDDSD) show a composition bias toward acidic residues. Positions 149–174 (SKKKNKKMVKKSKPERKEKKMPKPRL) are enriched in basic residues. Phosphothreonine is present on threonine 179. Serine 181 is subject to Phosphoserine. Over residues 197-206 (TSKEKTPSPK) the composition is skewed to basic and acidic residues. Threonine 202 bears the Phosphothreonine mark. 6 positions are modified to phosphoserine: serine 204, serine 214, serine 223, serine 229, serine 234, and serine 240. Positions 232 to 243 (EGSEDEAASGED) are enriched in acidic residues.

Does not interact with RAD51. Post-translationally, phosphorylated in an ATM-dependent manner in response to DNA damage. Phosphorylated by CDK1 and casein kinase.

It is found in the nucleus. Its subcellular location is the chromosome. Its function is as follows. Chromatin-associated protein involved in DNA repair by promoting homologous recombination (HR). Binds double-stranded DNA (dsDNA) and secondary DNA structures, such as D-loop structures, but with less affinity than RAD51AP1. The sequence is that of Nuclear ubiquitous casein and cyclin-dependent kinase substrate 1 from Rattus norvegicus (Rat).